The following is a 29-amino-acid chain: Dermaseptin-J8 (29 aa).

In terms of tissue distribution, expressed by the skin glands.

The protein localises to the secreted. In terms of biological role, has antimicrobial activity. This chain is Dermaseptin-J8, found in Phasmahyla jandaia (Jandaia leaf frog).